The primary structure comprises 175 residues: Adenine phosphoribosyltransferase (175 aa).

This sequence belongs to the purine/pyrimidine phosphoribosyltransferase family. Homodimer.

Its subcellular location is the cytoplasm. The catalysed reaction is AMP + diphosphate = 5-phospho-alpha-D-ribose 1-diphosphate + adenine. It participates in purine metabolism; AMP biosynthesis via salvage pathway; AMP from adenine: step 1/1. Functionally, catalyzes a salvage reaction resulting in the formation of AMP, that is energically less costly than de novo synthesis. The sequence is that of Adenine phosphoribosyltransferase from Thermosipho melanesiensis (strain DSM 12029 / CIP 104789 / BI429).